Here is a 104-residue protein sequence, read N- to C-terminus: MNNTLERLATLLEERKNADPQHSYVAHLYQAGQDKILKKLGEEAIETILAAKSRESDAIIYETADLWFHSLVMLAESGLRPEQVLSELERRFGLSGLEEKANRG.

This sequence belongs to the PRA-PH family.

The protein localises to the cytoplasm. The catalysed reaction is 1-(5-phospho-beta-D-ribosyl)-ATP + H2O = 1-(5-phospho-beta-D-ribosyl)-5'-AMP + diphosphate + H(+). It participates in amino-acid biosynthesis; L-histidine biosynthesis; L-histidine from 5-phospho-alpha-D-ribose 1-diphosphate: step 2/9. The polypeptide is Phosphoribosyl-ATP pyrophosphatase (Nitrosococcus oceani (strain ATCC 19707 / BCRC 17464 / JCM 30415 / NCIMB 11848 / C-107)).